We begin with the raw amino-acid sequence, 211 residues long: MSSLRFTEEDFRTFTIEGLDARMSVLKDTVRPKLQGLGDHFAPVLSALTGDEMFVHVAKHARRSVNPPDDSWVAFANNKRGYKKLPHFQIGLWETHVFVWFALIYESPLKQEYGQLFKKHLPDIESSIPSRFFWSADHTKPDAKRQSEMNEKDLENLFERLVNVKKAEALCGIQLSKDEVLHMSEEAFLSEIEAAFEKLAFLYRLTQKVSV.

Belongs to the UPF0637 family.

The protein is UPF0637 protein BLi01683/BL05149 of Bacillus licheniformis (strain ATCC 14580 / DSM 13 / JCM 2505 / CCUG 7422 / NBRC 12200 / NCIMB 9375 / NCTC 10341 / NRRL NRS-1264 / Gibson 46).